The following is a 587-amino-acid chain: Complement component C8 beta chain (587 aa).

Positions 1–31 are cleaved as a signal peptide; that stretch reads MNHKLKPTVGLGYCLLCAALCLLLLRDVAIA. A propeptide spanning residues 32–44 is cleaved from the precursor; sequence GSGEEPSGVREAR. Residues 56 to 111 enclose the TSP type-1 1 domain; the sequence is DCVQSEWSSWTRCDVCRKKRYRYAKLVQPSQFGGEPCHVQGKEVEPCSPPSRYDCT. 5 disulfide bridges follow: C57–C92, C68–C102, C71–C110, C118–C129, and C123–C142. C-linked (Man) tryptophan glycosylation is found at W62 and W65. The LDL-receptor class A domain occupies 117–159; it reads LCEGFLCTYTGRCVPIDLRCNGDDDCGDWSAEKGSPKVPKACK. 5 residues coordinate Ca(2+): L134, N137, D139, D141, and E148. Residues 154-500 form the MACPF domain; it reads VPKACKQEAQ…EYLEESSSCR (347 aa). C158 and C196 are oxidised to a cystine. A run of 4 beta stranded transmembrane segments spans residues 248-255, 258-265, 375-382, and 388-395; these read TTVSIGFA, GVAEFGFN, EQIVLKVG, and VYVTVGLE. 5 disulfide bridges follow: C374–C399, C499–C546, C501–C517, C504–C519, and C521–C530. The EGF-like domain maps to 501–531; it reads CAPCRNNGLAVLKGTRCECVCPSGYSGLGCE. In terms of domain architecture, TSP type-1 2 spans 541–587; it reads DGSWSCWGSWSPCRGRSKTRSRQCNNPAPSSGGIACRGLQMETTDCF. C-linked (Man) tryptophan glycosylation is found at W547 and W550. The cysteines at positions 553 and 586 are disulfide-linked.

It belongs to the complement C6/C7/C8/C9 family. In terms of assembly, heterotrimer of 3 chains: alpha (C8A), beta (C8B) and gamma (C8G); the alpha and gamma chains are disulfide bonded. Component of the membrane attack complex (MAC), composed of complement C5b, C6, C7, C8A, C8B, C8G and multiple copies of the pore-forming subunit C9.

The protein localises to the secreted. It is found in the target cell membrane. Functionally, component of the membrane attack complex (MAC), a multiprotein complex activated by the complement cascade, which inserts into a target cell membrane and forms a pore, leading to target cell membrane rupture and cell lysis. The MAC is initiated by proteolytic cleavage of C5 into complement C5b in response to the classical, alternative, lectin and GZMK complement pathways. The complement pathways consist in a cascade of proteins that leads to phagocytosis and breakdown of pathogens and signaling that strengthens the adaptive immune system. C8B, together with C8A and C8G, inserts into the target membrane, but does not form pores by itself. During MAC assembly, associates with C5b, C6 and C7 to form the C5b8 intermediate complex that inserts into the target membrane and traverses the bilayer increasing membrane rigidity. The polypeptide is Complement component C8 beta chain (c8b) (Oncorhynchus mykiss (Rainbow trout)).